The chain runs to 507 residues: Nucleoporin p54 (507 aa).

9 consecutive repeat copies span residues phenylalanine 5–glycine 6, phenylalanine 25–glycine 26, phenylalanine 28–glycine 29, phenylalanine 53–glycine 54, phenylalanine 61–glycine 62, phenylalanine 63–glycine 64, phenylalanine 67–glycine 68, phenylalanine 87–glycine 88, and phenylalanine 444–glycine 445. The tract at residues phenylalanine 5–glycine 445 is 9 X 2 AA repeats of F-G.

It belongs to the NUP54 family. In terms of assembly, component of the p62 complex, a complex composed of NUP62, NUP54, and the isoform p58 and isoform p45 of NUP58. Interacts with NUTF2. In terms of processing, O-glycosylated.

The protein resides in the nucleus. It localises to the nuclear pore complex. The protein localises to the nucleus membrane. In terms of biological role, component of the nuclear pore complex, a complex required for the trafficking across the nuclear membrane. This is Nucleoporin p54 (NUP54) from Homo sapiens (Human).